The sequence spans 204 residues: Golgi to ER traffic protein 1 (204 aa).

Over 1-11 the chain is Lumenal; it reads MLTLDIDPYTI. A helical membrane pass occupies residues 12 to 31; that stretch reads LVTSFLILAIQKLVTVIGKQ. Residues 32-116 are Cytoplasmic-facing; the sequence is KIQLYIWQIY…RIDSITKLAI (85 aa). Residues 78–113 adopt a coiled-coil conformation; that stretch reads AKWTKINRALDKLKLEVQELNETIAGEKTRIDSITK. The helical transmembrane segment at 117–137 threads the bilayer; the sequence is TLILTLPIWFLRIFCRKTALL. Residues 138–161 are Lumenal-facing; that stretch reads YIRKGILPAYLEWWLALPFFKSGT. The chain crosses the membrane as a helical span at residues 162–178; that stretch reads IGLTCWMFVVNSVLSNL. Topologically, residues 179–204 are cytoplasmic; sequence IFLISFPFTQKVERPIKPKNEQKTES.

Belongs to the WRB/GET1 family. As to quaternary structure, component of the Golgi to ER traffic (GET) complex, which is composed of GET1, GET2 and GET3. Within the complex, GET1 and GET2 form a heterotetramer which is stabilized by phosphatidylinositol binding and which binds to the GET3 homodimer.

It localises to the endoplasmic reticulum membrane. The protein localises to the golgi apparatus membrane. Required for the post-translational delivery of tail-anchored (TA) proteins to the endoplasmic reticulum. Together with GET2, acts as a membrane receptor for soluble GET3, which recognizes and selectively binds the transmembrane domain of TA proteins in the cytosol. The GET complex cooperates with the HDEL receptor ERD2 to mediate the ATP-dependent retrieval of resident ER proteins that contain a C-terminal H-D-E-L retention signal from the Golgi to the ER. In Lodderomyces elongisporus (strain ATCC 11503 / CBS 2605 / JCM 1781 / NBRC 1676 / NRRL YB-4239) (Yeast), this protein is Golgi to ER traffic protein 1.